Here is a 411-residue protein sequence, read N- to C-terminus: Citrate synthase (411 aa).

Residues His-304 and Asp-363 contribute to the active site.

It belongs to the citrate synthase family.

The catalysed reaction is oxaloacetate + acetyl-CoA + H2O = citrate + CoA + H(+). It participates in carbohydrate metabolism; tricarboxylic acid cycle; isocitrate from oxaloacetate: step 1/2. The polypeptide is Citrate synthase (gltA) (Rickettsia parkeri).